The sequence spans 457 residues: Cysteine desulfurase (457 aa).

Residues Ala-127, Thr-128, Gln-235, Ser-255, and His-257 each coordinate pyridoxal 5'-phosphate. Position 258 is an N6-(pyridoxal phosphate)lysine (Lys-258). A pyridoxal 5'-phosphate-binding site is contributed by Thr-295. Cys-381 functions as the Cysteine persulfide intermediate in the catalytic mechanism. Cys-381 is a [2Fe-2S] cluster binding site. Cys-381 lines the Zn(2+) pocket. Cysteine persulfide is present on Cys-381.

Belongs to the class-V pyridoxal-phosphate-dependent aminotransferase family. NifS/IscS subfamily. Homodimer. Component of the mitochondrial core iron-sulfur cluster (ISC) complex composed of NFS1, LYRM4, NDUFAB1, ISCU, FXN, and FDX2; this complex is a heterohexamer containing two copies of each monomer. Component of cyteine desulfurase complex composed of NFS1, LYRM4 and NDUFAB1; this complex contributes to the activation of cysteine desulfurase activity and NFS1 stabilization. Interacts (homodimer form) with ISCU (D-state); each monomer interacts with the C-terminal regions of each NFS1 monomer. Interacts with HSPA9. Interacts (via homodimer form) with FDX2. Interacts (via homodimer form) with FXN. Interacts with LYRM4. Component of a complex composed of FXN, NFS1, LYRM4 and ISCU. As to quaternary structure, monomer. Homodimer. Oligomer. Interacts with ISCU. Component of the cysteine desulfurase complex composed of NFS1 and LYRM4; this complex contributes to the activation of cysteine desulfurase activity. Interacts with MOCS3. Requires pyridoxal 5'-phosphate as cofactor. In terms of processing, N-gluconoylated. Post-translationally, cysteine persulfide intermediate is reduced by thiol-containing molecules like glutathione and L-cysteine. Persulfide reduction is a rate-limiting step of cysteine desulfurase catalytic cycle. As to expression, predominantly expressed in heart and skeletal muscle. Also found in brain, liver and pancreas.

It is found in the mitochondrion. The protein localises to the cytoplasm. It localises to the nucleus. Its subcellular location is the cytoskeleton. The protein resides in the microtubule organizing center. It is found in the centrosome. It catalyses the reaction (sulfur carrier)-H + L-cysteine = (sulfur carrier)-SH + L-alanine. The catalysed reaction is L-cysteinyl-[cysteine desulfurase] + L-cysteine = S-sulfanyl-L-cysteinyl-[cysteine desulfurase] + L-alanine. Its activity is regulated as follows. Active only in complex with LYRM4. Functionally, cysteine desulfurase, of the core iron-sulfur cluster (ISC) assembly complex, that catalyzes the desulfuration of L-cysteine to L-alanine, as component of the cysteine desulfurase complex, leading to the formation of a cysteine persulfide intermediate at the active site cysteine residue and participates in the [2Fe-2S] clusters assembly on the scaffolding protein ISCU. The persulfide is then transferred on the flexible Cys loop from the catalytic site of NFS1 to the surface of NFS1. After the NFS1-linked persulfide sulfur is transferred to one of the conserved Cys residues of the scaffold, a reaction assisted by FXN. The core iron-sulfur cluster (ISC) assembly complex is involved in the de novo synthesis of a [2Fe-2S] cluster, the first step of the mitochondrial iron-sulfur protein biogenesis. This process is initiated by the cysteine desulfurase complex (NFS1:LYRM4:NDUFAB1) that produces persulfide which is delivered on the scaffold protein ISCU in a FXN-dependent manner. Then this complex is stabilized by FDX2 which provides reducing equivalents to accomplish the [2Fe-2S] cluster assembly. Finally, the [2Fe-2S] cluster is transferred from ISCU to chaperone proteins, including HSCB, HSPA9 and GLRX5. Its function is as follows. May catalyze the desulfuration of L-cysteine to L-alanine as component of the cysteine desulfurase complex (NFS1:LYRM4), leading to the formation of a cysteine persulfide intermediate. Acts as a sulfur donor for MOCS3 by transferring the sulfur of the cysteine persulfide intermediate on MOCS3. The polypeptide is Cysteine desulfurase (Homo sapiens (Human)).